The primary structure comprises 501 residues: Phosphatidylinositol 4-kinase type 2-beta (501 aa).

Disordered regions lie at residues 1-30 (MMAE…SSEV) and 65-122 (TELE…NHFP). The segment covering 17 to 27 (GDSTPETNFLS) has biased composition (polar residues). A compositionally biased stretch (low complexity) spans 76–88 (ALLLPGPAGSLSP). A compositionally biased stretch (polar residues) spans 99–117 (NMLSSSSDNLASPGNSSGE). One can recognise a PI3K/PI4K catalytic domain in the interval 141–471 (GVFPERISQG…VQMPRVVVER (331 aa)). Positions 147 to 153 (ISQGSSG) are G-loop. ATP contacts are provided by Ser-154 and Lys-169. The segment at 174–176 (EPY) is important for substrate binding. The tract at residues 182 to 195 (KWTKYFHKVCCPCC) is important for interaction with membranes. Residues 278-281 (QLFV) and 292-293 (RK) contribute to the ATP site. The segment at 285 to 293 (HEADFWLRK) is important for interaction with membranes. The tract at residues 322–330 (RNTDRGNDN) is catalytic loop. The interval 362-382 (AIDNGLAFPFKHPDEWRAYPF) is activation loop. Asp-364 serves as a coordination point for ATP. An important for interaction with membranes region spans residues 377–386 (WRAYPFHWAW).

This sequence belongs to the PI3/PI4-kinase family. Type II PI4K subfamily.

The protein localises to the cytoplasm. The protein resides in the cytosol. It is found in the golgi apparatus membrane. Its subcellular location is the endoplasmic reticulum membrane. It localises to the cell membrane. The protein localises to the early endosome membrane. The catalysed reaction is a 1,2-diacyl-sn-glycero-3-phospho-(1D-myo-inositol) + ATP = a 1,2-diacyl-sn-glycero-3-phospho-(1D-myo-inositol 4-phosphate) + ADP + H(+). Its function is as follows. Contributes to the overall PI4-kinase activity of the cell. This contribution may be especially significant in plasma membrane, endosomal and Golgi compartments. The phosphorylation of phosphatidylinositol (PI) to PI4P is the first committed step in the generation of phosphatidylinositol 4,5-bisphosphate (PIP2), a precursor of the second messenger inositol 1,4,5-trisphosphate (InsP3). The polypeptide is Phosphatidylinositol 4-kinase type 2-beta (pi4k2b) (Danio rerio (Zebrafish)).